We begin with the raw amino-acid sequence, 1761 residues long: Nonribosomal peptide synthetase 6 (1761 aa).

The adenylation stretch occupies residues 63-468 (ERAALHPEKI…GRQDQQVKLR (406 aa)). Positions 600 to 675 (EATTEMELKL…AMAEKAKPVS (76 aa)) constitute a Carrier 1 domain. Residue Ser-636 is modified to O-(pantetheine 4'-phosphoryl)serine. The condensation 1 stretch occupies residues 712–1135 (VEDVYPCTPL…AVLDPAEARD (424 aa)). Carrier domains are found at residues 1169–1242 (SPNE…SNER) and 1237–1313 (SASN…EEEM). Ser-1203 and Ser-1274 each carry O-(pantetheine 4'-phosphoryl)serine. The interval 1354–1677 (IYPTRPLQQL…DKVQWFDTVV (324 aa)) is condensation 2.

Belongs to the NRP synthetase family.

It functions in the pathway siderophore biosynthesis. NRPS involved in extracellular coprogen-type siderophores biosynthesis including coprogen, neocoprogen I and neocoprogen II. The role of extracellular siderophores in fungal virulence to plants is to supply iron to the fungus during plant infection, but not to act as phytotoxins, depriving their hosts of iron. The polypeptide is Nonribosomal peptide synthetase 6 (Cochliobolus miyabeanus (Brown spot disease fungus)).